A 294-amino-acid chain; its full sequence is dTDP-4-dehydrorhamnose reductase (294 aa).

NADH-binding positions include 11 to 13 (GQL), 38 to 39 (DI), and 62 to 64 (AYT). Residues 12-13 (QL), 38-39 (DI), and 62-64 (AYT) contribute to the NADPH site. 103-104 (TD) serves as a coordination point for dTDP-beta-L-rhamnose. The NADH site is built by Tyr-127 and Lys-131. Residues Tyr-127 and Lys-131 each coordinate NADPH. Tyr-127 serves as the catalytic Proton donor/acceptor. Trp-152 provides a ligand contact to dTDP-beta-L-rhamnose.

The protein belongs to the dTDP-4-dehydrorhamnose reductase family. In terms of assembly, homodimer. Mg(2+) is required as a cofactor.

It carries out the reaction dTDP-beta-L-rhamnose + NADP(+) = dTDP-4-dehydro-beta-L-rhamnose + NADPH + H(+). It functions in the pathway carbohydrate biosynthesis; dTDP-L-rhamnose biosynthesis. Its pathway is bacterial outer membrane biogenesis; LPS O-antigen biosynthesis. Involved in the biosynthesis of the dTDP-L-rhamnose which is an important component of lipopolysaccharide (LPS). Catalyzes the reduction of dTDP-6-deoxy-L-lyxo-4-hexulose to yield dTDP-L-rhamnose. In Aggregatibacter actinomycetemcomitans (Actinobacillus actinomycetemcomitans), this protein is dTDP-4-dehydrorhamnose reductase.